We begin with the raw amino-acid sequence, 453 residues long: SH2 domain-containing protein 4A (453 aa).

The stretch at Glu96–Leu127 forms a coiled coil. The disordered stretch occupies residues Ala280–Ile301. A compositionally biased stretch (pro residues) spans Pro284–Pro293. Residues Trp347–Cys439 enclose the SH2 domain.

It is found in the cytoplasm. Functionally, inhibits estrogen-induced cell proliferation. This is SH2 domain-containing protein 4A (sh2d4a) from Xenopus tropicalis (Western clawed frog).